The chain runs to 186 residues: GTP-dependent dephospho-CoA kinase (186 aa).

GTP-binding residues include Asp-43, Ile-44, Val-45, Asp-62, Glu-120, and Asp-143.

The protein belongs to the GTP-dependent DPCK family.

It carries out the reaction 3'-dephospho-CoA + GTP = GDP + CoA + H(+). The protein operates within cofactor biosynthesis; coenzyme A biosynthesis. Catalyzes the GTP-dependent phosphorylation of the 3'-hydroxyl group of dephosphocoenzyme A to form coenzyme A (CoA). In Haloquadratum walsbyi (strain DSM 16790 / HBSQ001), this protein is GTP-dependent dephospho-CoA kinase.